Here is a 149-residue protein sequence, read N- to C-terminus: Large ribosomal subunit protein uL15 (149 aa).

2 stretches are compositionally biased toward basic residues: residues 1–14 (MPSR…HRGH) and 21–30 (RIGKHRKHPG). The tract at residues 1 to 39 (MPSRFTKTRKHRGHVSAGKGRIGKHRKHPGGRGMAGGQH) is disordered. 2 consecutive short sequence motifs (nuclear localization signal) follow at residues 7 to 13 (KTRKHRG) and 24 to 30 (KHRKHPG). Residue lysine 96 forms a Glycyl lysine isopeptide (Lys-Gly) (interchain with G-Cter in ubiquitin) linkage.

This sequence belongs to the universal ribosomal protein uL15 family. As to quaternary structure, component of the large ribosomal subunit (LSU). Mature yeast ribosomes consist of a small (40S) and a large (60S) subunit. The 40S small subunit contains 1 molecule of ribosomal RNA (18S rRNA) and 33 different proteins (encoded by 57 genes). The large 60S subunit contains 3 rRNA molecules (25S, 5.8S and 5S rRNA) and 46 different proteins (encoded by 81 genes).

The protein localises to the cytoplasm. Its function is as follows. Component of the ribosome, a large ribonucleoprotein complex responsible for the synthesis of proteins in the cell. The small ribosomal subunit (SSU) binds messenger RNAs (mRNAs) and translates the encoded message by selecting cognate aminoacyl-transfer RNA (tRNA) molecules. The large subunit (LSU) contains the ribosomal catalytic site termed the peptidyl transferase center (PTC), which catalyzes the formation of peptide bonds, thereby polymerizing the amino acids delivered by tRNAs into a polypeptide chain. The nascent polypeptides leave the ribosome through a tunnel in the LSU and interact with protein factors that function in enzymatic processing, targeting, and the membrane insertion of nascent chains at the exit of the ribosomal tunnel. This is Large ribosomal subunit protein uL15 from Saccharomyces cerevisiae (strain ATCC 204508 / S288c) (Baker's yeast).